The primary structure comprises 235 residues: Aspartate/glutamate leucyltransferase (235 aa).

The protein belongs to the R-transferase family. Bpt subfamily.

The protein localises to the cytoplasm. It catalyses the reaction N-terminal L-glutamyl-[protein] + L-leucyl-tRNA(Leu) = N-terminal L-leucyl-L-glutamyl-[protein] + tRNA(Leu) + H(+). The enzyme catalyses N-terminal L-aspartyl-[protein] + L-leucyl-tRNA(Leu) = N-terminal L-leucyl-L-aspartyl-[protein] + tRNA(Leu) + H(+). Its function is as follows. Functions in the N-end rule pathway of protein degradation where it conjugates Leu from its aminoacyl-tRNA to the N-termini of proteins containing an N-terminal aspartate or glutamate. The polypeptide is Aspartate/glutamate leucyltransferase (Pseudomonas savastanoi pv. phaseolicola (strain 1448A / Race 6) (Pseudomonas syringae pv. phaseolicola (strain 1448A / Race 6))).